The sequence spans 202 residues: Orotate phosphoribosyltransferase (202 aa).

5-phospho-alpha-D-ribose 1-diphosphate-binding positions include K93 and E113–S121. T117 and R145 together coordinate orotate.

This sequence belongs to the purine/pyrimidine phosphoribosyltransferase family. PyrE subfamily. As to quaternary structure, homodimer. Requires Mg(2+) as cofactor.

The enzyme catalyses orotidine 5'-phosphate + diphosphate = orotate + 5-phospho-alpha-D-ribose 1-diphosphate. The protein operates within pyrimidine metabolism; UMP biosynthesis via de novo pathway; UMP from orotate: step 1/2. Catalyzes the transfer of a ribosyl phosphate group from 5-phosphoribose 1-diphosphate to orotate, leading to the formation of orotidine monophosphate (OMP). The polypeptide is Orotate phosphoribosyltransferase (Campylobacter jejuni subsp. jejuni serotype O:2 (strain ATCC 700819 / NCTC 11168)).